The sequence spans 467 residues: Asparagine--tRNA ligase (467 aa).

This sequence belongs to the class-II aminoacyl-tRNA synthetase family. As to quaternary structure, homodimer.

The protein resides in the cytoplasm. The enzyme catalyses tRNA(Asn) + L-asparagine + ATP = L-asparaginyl-tRNA(Asn) + AMP + diphosphate + H(+). This is Asparagine--tRNA ligase from Pasteurella multocida (strain Pm70).